Here is a 297-residue protein sequence, read N- to C-terminus: Urease accessory protein UreD (297 aa).

The protein belongs to the UreD family. As to quaternary structure, ureD, UreF and UreG form a complex that acts as a GTP-hydrolysis-dependent molecular chaperone, activating the urease apoprotein by helping to assemble the nickel containing metallocenter of UreC. The UreE protein probably delivers the nickel.

It localises to the cytoplasm. Required for maturation of urease via the functional incorporation of the urease nickel metallocenter. The protein is Urease accessory protein UreD of Anaeromyxobacter sp. (strain Fw109-5).